We begin with the raw amino-acid sequence, 610 residues long: NTPase KAP family P-loop domain-containing protein 1 (610 aa).

The 414-residue stretch at 1–414 (MQQEAAQRES…NTVPITVRLL (414 aa)) folds into the KAP NTPase domain. The next 3 helical transmembrane spans lie at 22-42 (AVSG…QPII), 118-138 (VCLG…LLYL), and 157-177 (VFGG…VYSV). A disordered region spans residues 540–587 (ALKPPSPPKSPTRDTPHAAHRANSASRAPPSGRASGQAGEGHHTGDLA). Low complexity predominate over residues 560 to 575 (RANSASRAPPSGRASG).

The protein resides in the membrane. This is NTPase KAP family P-loop domain-containing protein 1 (NKPD1) from Homo sapiens (Human).